The primary structure comprises 113 residues: Ribonuclease P protein component (113 aa).

It belongs to the RnpA family. In terms of assembly, consists of a catalytic RNA component (M1 or rnpB) and a protein subunit.

The enzyme catalyses Endonucleolytic cleavage of RNA, removing 5'-extranucleotides from tRNA precursor.. In terms of biological role, RNaseP catalyzes the removal of the 5'-leader sequence from pre-tRNA to produce the mature 5'-terminus. It can also cleave other RNA substrates such as 4.5S RNA. The protein component plays an auxiliary but essential role in vivo by binding to the 5'-leader sequence and broadening the substrate specificity of the ribozyme. The polypeptide is Ribonuclease P protein component (Ligilactobacillus salivarius (strain UCC118) (Lactobacillus salivarius)).